The primary structure comprises 266 residues: Probable septum site-determining protein MinC (266 aa).

Residues 1–21 show a composition bias toward low complexity; that stretch reads MSEAESTPVEEPVVESTEGSE. The interval 1 to 28 is disordered; sequence MSEAESTPVEEPVVESTEGSEAIPEVEQ.

This sequence belongs to the MinC family. As to quaternary structure, interacts with MinD and FtsZ.

Its function is as follows. Cell division inhibitor that blocks the formation of polar Z ring septums. Rapidly oscillates between the poles of the cell to destabilize FtsZ filaments that have formed before they mature into polar Z rings. Prevents FtsZ polymerization. The protein is Probable septum site-determining protein MinC of Thermosynechococcus vestitus (strain NIES-2133 / IAM M-273 / BP-1).